We begin with the raw amino-acid sequence, 372 residues long: Probable E3 ubiquitin-protein ligase makorin-1 (372 aa).

2 C3H1-type zinc fingers span residues K20–T45 and K48–P75. The disordered stretch occupies residues N78 to Q110. A compositionally biased stretch (low complexity) spans S93–P103. A C3H1-type 3 zinc finger spans residues A153–V180. The segment at C181–H208 is makorin-type Cys-His. An RING-type zinc finger spans residues C226–R280. The C3H1-type 4 zinc-finger motif lies at G309–P338.

The enzyme catalyses S-ubiquitinyl-[E2 ubiquitin-conjugating enzyme]-L-cysteine + [acceptor protein]-L-lysine = [E2 ubiquitin-conjugating enzyme]-L-cysteine + N(6)-ubiquitinyl-[acceptor protein]-L-lysine.. It participates in protein modification; protein ubiquitination. Functionally, E3 ubiquitin ligase catalyzing the covalent attachment of ubiquitin moieties onto substrate proteins. The polypeptide is Probable E3 ubiquitin-protein ligase makorin-1 (Tetraodon nigroviridis (Spotted green pufferfish)).